A 563-amino-acid polypeptide reads, in one-letter code: Arginine--tRNA ligase (563 aa).

Positions Pro121–His131 match the 'HIGH' region motif.

Belongs to the class-I aminoacyl-tRNA synthetase family. In terms of assembly, monomer.

It localises to the cytoplasm. It carries out the reaction tRNA(Arg) + L-arginine + ATP = L-arginyl-tRNA(Arg) + AMP + diphosphate. This is Arginine--tRNA ligase (argS) from Streptococcus pneumoniae serotype 4 (strain ATCC BAA-334 / TIGR4).